The following is a 37-amino-acid chain: Defensin-A (37 aa).

3 disulfides stabilise this stretch: C4-C25, C10-C33, and C14-C35.

It localises to the secreted. In terms of biological role, has antibacterial activity against M.luteus and E.coli. This chain is Defensin-A, found in Mytilus edulis (Blue mussel).